The primary structure comprises 334 residues: MRNWLVALASLLLLAGCEKPAEQVHLSGPTMGTTYNIKYIQQPGIADSKTLQTEIDRLLEEVNDQMSTYRKDSELSRFNQHTSSEPFAVSTQTLTVVKEAIRLNGLTEGALDVTVGPLVNLWGFGPEARPDVVPTDEELNARRAITGIEHLTIEGNTLSKDIPELYVDLSTIAKGWGVDVVADYLQSQGIENYMVEIGGEIRLKGLNRDGVPWRIAIEKPSVDQRSVQEIIEPGDYAIATSGDYRNYFEQDGVRYSHIIDPTTGRPINNRVVSVTVLDKSCMTADGLATGLMVMGEERGMAVAEANQIPVLMIVKTDDGFKEYASSSFKPFLSK.

An N-terminal signal peptide occupies residues 1–16 (MRNWLVALASLLLLAG). Cys17 carries N-palmitoyl cysteine lipidation. Cys17 is lipidated: S-diacylglycerol cysteine. FAD-binding positions include Met31, Tyr69, 110 to 112 (ALD), and Asp168. Thr171 is a binding site for Mg(2+). FAD-binding residues include Lys174 and Ile259. Residues Asp285 and Thr289 each coordinate Mg(2+).

This sequence belongs to the ApbE family. The cofactor is Mg(2+).

The protein localises to the cell inner membrane. The enzyme catalyses L-threonyl-[protein] + FAD = FMN-L-threonyl-[protein] + AMP + H(+). Flavin transferase that catalyzes the transfer of the FMN moiety of FAD and its covalent binding to the hydroxyl group of a threonine residue in a target flavoprotein such as NqrB and NqrC, two subunits of the NQR complex. Cannot use directly FMN instead of FAD as substrate. The chain is FAD:protein FMN transferase from Vibrio cholerae serotype O1 (strain ATCC 39541 / Classical Ogawa 395 / O395).